The sequence spans 318 residues: C1GALT1-specific chaperone 1 (318 aa).

Residues 1-6 lie on the Cytoplasmic side of the membrane; sequence MLSESS. The chain crosses the membrane as a helical; Signal-anchor for type II membrane protein span at residues 7–26; it reads SFLKGVMLGSIFCALITMLG. Residues 27–318 are Lumenal-facing; sequence HIRIGHGNRM…FLPPNGSDND (292 aa).

It belongs to the glycosyltransferase 31 family. Beta3-Gal-T subfamily. As to quaternary structure, associates with core 1 beta-3-galactosyltransferase (C1GALT1), probably not with the soluble active form. In terms of tissue distribution, ubiquitously expressed. Abundantly expressed in salivary gland, stomach, small intestine, kidney, and testis and at intermediate levels in whole brain, cerebellum, spinal cord, thymus, spleen, trachea, lung, pancreas, ovary, and uterus.

Its subcellular location is the membrane. Probable chaperone required for the generation of 1 O-glycan Gal-beta1-3GalNAc-alpha1-Ser/Thr (T antigen), which is a precursor for many extended O-glycans in glycoproteins. Probably acts as a specific molecular chaperone assisting the folding/stability of core 1 beta-3-galactosyltransferase (C1GALT1). This Homo sapiens (Human) protein is C1GALT1-specific chaperone 1 (C1GALT1C1).